The sequence spans 1342 residues: DNA-directed RNA polymerase subunit beta (1342 aa).

The protein belongs to the RNA polymerase beta chain family. As to quaternary structure, the RNAP catalytic core consists of 2 alpha, 1 beta, 1 beta' and 1 omega subunit. When a sigma factor is associated with the core the holoenzyme is formed, which can initiate transcription.

It carries out the reaction RNA(n) + a ribonucleoside 5'-triphosphate = RNA(n+1) + diphosphate. DNA-dependent RNA polymerase catalyzes the transcription of DNA into RNA using the four ribonucleoside triphosphates as substrates. The polypeptide is DNA-directed RNA polymerase subunit beta (Mannheimia succiniciproducens (strain KCTC 0769BP / MBEL55E)).